A 366-amino-acid chain; its full sequence is Ferrochelatase (366 aa).

Residues histidine 210 and glutamate 293 each coordinate Fe cation.

The protein belongs to the ferrochelatase family.

Its subcellular location is the cytoplasm. The catalysed reaction is heme b + 2 H(+) = protoporphyrin IX + Fe(2+). The protein operates within porphyrin-containing compound metabolism; protoheme biosynthesis; protoheme from protoporphyrin-IX: step 1/1. Catalyzes the ferrous insertion into protoporphyrin IX. The chain is Ferrochelatase from Leptospira borgpetersenii serovar Hardjo-bovis (strain L550).